A 348-amino-acid polypeptide reads, in one-letter code: MTVVSPIRVLVVDDSAFARKVLRQVLSSAEGLEVVGVARDGLDALEKVAELSPDVLTLDLVMPGLDGLGVLRALASSAAAPRVVVVSSAGEESELAVAALQAGAVELVNKPTALATERLYELGGELVAKVRTAAGAVARAPPEPAPSPEATSAPVARAAAKSLVVVGTSTGGPQALTRLLSELPVDFPAPLALALHIPTGYTEAVARRLNAHCALEVFEAVDGLELRPGRVVLARSGQHLKLERHGPVTLARLDRQPLRTAHHPSVDVLFESAARSWGSDVVGLVLTGMGDDGVAGARAIREAGGTVLTESESSCVVYGMPRAVKEAGLATDSAPLEGMLALLRRHVR.

The region spanning 8–125 (RVLVVDDSAF…TERLYELGGE (118 aa)) is the Response regulatory domain. At D59 the chain carries 4-aspartylphosphate. A CheB-type methylesterase domain is found at 157-348 (RAAAKSLVVV…MLALLRRHVR (192 aa)). Active-site residues include S169, H196, and D292.

The protein belongs to the CheB family. In terms of processing, phosphorylated by CheA. Phosphorylation of the N-terminal regulatory domain activates the methylesterase activity.

It is found in the cytoplasm. The catalysed reaction is [protein]-L-glutamate 5-O-methyl ester + H2O = L-glutamyl-[protein] + methanol + H(+). It carries out the reaction L-glutaminyl-[protein] + H2O = L-glutamyl-[protein] + NH4(+). Involved in chemotaxis. Part of a chemotaxis signal transduction system that modulates chemotaxis in response to various stimuli. Catalyzes the demethylation of specific methylglutamate residues introduced into the chemoreceptors (methyl-accepting chemotaxis proteins or MCP) by CheR. Also mediates the irreversible deamidation of specific glutamine residues to glutamic acid. This Myxococcus xanthus (strain DK1622) protein is Protein-glutamate methylesterase/protein-glutamine glutaminase 5.